The chain runs to 246 residues: Ribosomal RNA small subunit methyltransferase J (246 aa).

Residues 115 to 116 (ER) and Asp-169 contribute to the S-adenosyl-L-methionine site.

It belongs to the methyltransferase superfamily. RsmJ family.

The protein localises to the cytoplasm. It catalyses the reaction guanosine(1516) in 16S rRNA + S-adenosyl-L-methionine = N(2)-methylguanosine(1516) in 16S rRNA + S-adenosyl-L-homocysteine + H(+). Specifically methylates the guanosine in position 1516 of 16S rRNA. The sequence is that of Ribosomal RNA small subunit methyltransferase J from Buchnera aphidicola subsp. Acyrthosiphon pisum (strain 5A).